Here is an 85-residue protein sequence, read N- to C-terminus: Elongation factor 1-beta (85 aa).

This sequence belongs to the EF-1-beta/EF-1-delta family.

Functionally, promotes the exchange of GDP for GTP in EF-1-alpha/GDP, thus allowing the regeneration of EF-1-alpha/GTP that could then be used to form the ternary complex EF-1-alpha/GTP/AAtRNA. The protein is Elongation factor 1-beta of Methanospirillum hungatei JF-1 (strain ATCC 27890 / DSM 864 / NBRC 100397 / JF-1).